Consider the following 160-residue polypeptide: Major pollen allergen Bet v 1-F/I (160 aa).

Residues lysine 55, tyrosine 82, tyrosine 84, and asparagine 101 each coordinate brassinolide.

It belongs to the BetVI family.

The protein resides in the cytoplasm. Its function is as follows. May be a general steroid carrier protein. This Betula pendula (European white birch) protein is Major pollen allergen Bet v 1-F/I (BETV1F).